We begin with the raw amino-acid sequence, 405 residues long: Tryptophan synthase beta chain (405 aa).

At K98 the chain carries N6-(pyridoxal phosphate)lysine.

The protein belongs to the TrpB family. Tetramer of two alpha and two beta chains. It depends on pyridoxal 5'-phosphate as a cofactor.

The enzyme catalyses (1S,2R)-1-C-(indol-3-yl)glycerol 3-phosphate + L-serine = D-glyceraldehyde 3-phosphate + L-tryptophan + H2O. It functions in the pathway amino-acid biosynthesis; L-tryptophan biosynthesis; L-tryptophan from chorismate: step 5/5. In terms of biological role, the beta subunit is responsible for the synthesis of L-tryptophan from indole and L-serine. This is Tryptophan synthase beta chain from Xanthomonas campestris pv. campestris (strain 8004).